The primary structure comprises 83 residues: UPF0512 protein W (83 aa).

The protein belongs to the UPF0512 family.

In Dictyostelium discoideum (Social amoeba), this protein is UPF0512 protein W.